The chain runs to 439 residues: MSKYFEKVSKIKYEGPKSNNPYAFKFYNPEEVIDGKTMEEHLRFSIAYWHTFTADGTDQFGKATMQRPWNHLTDPMDIAKARVEAAFEFFDKINAPFFCFHDRDIAPEGDTLRETNKNLDIIVAMIKDYLKTSKTKVLWGTANLFSNPRFVHGASTSCNADVFAYSAAQVKKALEITKELGGQNYVFWGGREGYETLLNTDMELELDNFARFLHMAVDYAKEIGFEGQFLIEPKPKEPTKHQYDFDVANVLAFLRKYDLDKYFKVNIEANHATLAAHDFQHELRYARINGVLGSIDANTGDMLLGWDTDQFPTDIRMTTLAMYEVIKMGGFDKGGLNFDAKVRRASFEPEDLFLGHIAGMDAFAKGFKVAYKLVKDGVFDKFIEERYASYKDGIGADIVSGKADFKSLEKYALEHSEIVNKSGRQEMLESILNQYLFTE.

Residues His101 and Asp104 contribute to the active site. Residues Glu232, Glu268, His271, Asp296, Asp307, Asp309, and Asp339 each contribute to the Mg(2+) site.

The protein belongs to the xylose isomerase family. In terms of assembly, homotetramer. Requires Mg(2+) as cofactor.

It localises to the cytoplasm. The catalysed reaction is alpha-D-xylose = alpha-D-xylulofuranose. This chain is Xylose isomerase (xylA), found in Thermoanaerobacterium thermosaccharolyticum (strain ATCC 7956 / DSM 571 / NCIMB 9385 / NCA 3814 / NCTC 13789 / WDCM 00135 / 2032) (Clostridium thermosaccharolyticum).